The chain runs to 440 residues: Glutamate--tRNA ligase 2 (440 aa).

The 'HIGH' region signature appears at 8-18; it reads PSPTGYLHVGN. The 'KMSKS' region motif lies at 239-243; sequence ALSKR. ATP is bound at residue K242.

It belongs to the class-I aminoacyl-tRNA synthetase family. Glutamate--tRNA ligase type 1 subfamily. In terms of assembly, monomer.

The protein localises to the cytoplasm. The enzyme catalyses tRNA(Glu) + L-glutamate + ATP = L-glutamyl-tRNA(Glu) + AMP + diphosphate. In terms of biological role, catalyzes the attachment of glutamate to tRNA(Glu) in a two-step reaction: glutamate is first activated by ATP to form Glu-AMP and then transferred to the acceptor end of tRNA(Glu). The polypeptide is Glutamate--tRNA ligase 2 (Dinoroseobacter shibae (strain DSM 16493 / NCIMB 14021 / DFL 12)).